We begin with the raw amino-acid sequence, 473 residues long: Protein AUXIN RESPONSE 4 (473 aa).

Residues 1-10 (MAIITEEEED) show a composition bias toward acidic residues. The disordered stretch occupies residues 1-38 (MAIITEEEEDPKTLNPPKNKPKDSDFTKSESTMKNPKP). Residues 29-38 (SESTMKNPKP) are compositionally biased toward polar residues. Residues 44–64 (FPFWFYFTVVVSLATIIFISL) form a helical membrane-spanning segment. In terms of domain architecture, AB hydrolase-1 spans 119 to 283 (TVVIVHGLGL…DSSISPALPL (165 aa)).

In terms of tissue distribution, most abundant in root tissue, lesser amounts in rosette leaves, stems and flowers and very little in mature siliques.

The protein resides in the endoplasmic reticulum membrane. Its function is as follows. Required for the auxin influx facilitator AUX1 polar trafficking and its asymmetric localization within the plasma membrane. Not involved in the PIN proteins localization. The sequence is that of Protein AUXIN RESPONSE 4 (AXR4) from Arabidopsis thaliana (Mouse-ear cress).